The primary structure comprises 202 residues: Imidazoleglycerol-phosphate dehydratase (202 aa).

Belongs to the imidazoleglycerol-phosphate dehydratase family.

The protein resides in the cytoplasm. The enzyme catalyses D-erythro-1-(imidazol-4-yl)glycerol 3-phosphate = 3-(imidazol-4-yl)-2-oxopropyl phosphate + H2O. The protein operates within amino-acid biosynthesis; L-histidine biosynthesis; L-histidine from 5-phospho-alpha-D-ribose 1-diphosphate: step 6/9. The sequence is that of Imidazoleglycerol-phosphate dehydratase from Salinibacter ruber (strain DSM 13855 / M31).